We begin with the raw amino-acid sequence, 479 residues long: Aspartyl/glutamyl-tRNA(Asn/Gln) amidotransferase subunit B (479 aa).

This sequence belongs to the GatB/GatE family. GatB subfamily. As to quaternary structure, heterotrimer of A, B and C subunits.

It carries out the reaction L-glutamyl-tRNA(Gln) + L-glutamine + ATP + H2O = L-glutaminyl-tRNA(Gln) + L-glutamate + ADP + phosphate + H(+). It catalyses the reaction L-aspartyl-tRNA(Asn) + L-glutamine + ATP + H2O = L-asparaginyl-tRNA(Asn) + L-glutamate + ADP + phosphate + 2 H(+). Its function is as follows. Allows the formation of correctly charged Asn-tRNA(Asn) or Gln-tRNA(Gln) through the transamidation of misacylated Asp-tRNA(Asn) or Glu-tRNA(Gln) in organisms which lack either or both of asparaginyl-tRNA or glutaminyl-tRNA synthetases. The reaction takes place in the presence of glutamine and ATP through an activated phospho-Asp-tRNA(Asn) or phospho-Glu-tRNA(Gln). This Streptococcus pyogenes serotype M4 (strain MGAS10750) protein is Aspartyl/glutamyl-tRNA(Asn/Gln) amidotransferase subunit B.